The chain runs to 1218 residues: Thrombospondin type 1 domain-containing protein (1218 aa).

Disordered stretches follow at residues 82-101 (SAGFPRSASSSASSAPPCSS), 189-240 (SLEE…SRTR), 298-383 (HTAN…VNGL), and 445-471 (GGKSRRSEWRRKRTGMMASEARESHRG). Positions 201 to 210 (GYEEERERRS) are enriched in basic and acidic residues. The span at 315–375 (SSRFTSKASS…SSPLSSSPDS (61 aa)) shows a compositional bias: low complexity. One can recognise a TSP type-1 domain in the interval 638–704 (SCITGPWSEW…RRKCNLGACP (67 aa)). Residues 886–906 (GVSHLWISLCAGAVAAVVFLV) traverse the membrane as a helical segment. A disordered region spans residues 1129–1153 (RRRARRGRREGDSGEGGDCGEARKA).

In terms of assembly, component of a complex, at least composed of cysteine repeat modular protein A (CRMPa), cysteine repeat modular protein B (CRMPb), micronemal protein 15 (MIC15) and thrombospondin type 1 domain-containing protein (TSP1).

It is found in the membrane. In terms of biological role, required for rhoptry secretion. Plays a role in host cell invasion. The chain is Thrombospondin type 1 domain-containing protein from Toxoplasma gondii.